Here is a 179-residue protein sequence, read N- to C-terminus: NADH-quinone oxidoreductase subunit I (179 aa).

2 consecutive 4Fe-4S ferredoxin-type domains span residues 49–79 (LTRD…LQKG) and 89–118 (EFFR…LTPD). 8 residues coordinate [4Fe-4S] cluster: C59, C62, C65, C69, C98, C101, C104, and C108.

The protein belongs to the complex I 23 kDa subunit family. As to quaternary structure, NDH-1 is composed of 14 different subunits. Subunits NuoA, H, J, K, L, M, N constitute the membrane sector of the complex. The cofactor is [4Fe-4S] cluster.

The protein localises to the cell inner membrane. The enzyme catalyses a quinone + NADH + 5 H(+)(in) = a quinol + NAD(+) + 4 H(+)(out). In terms of biological role, NDH-1 shuttles electrons from NADH, via FMN and iron-sulfur (Fe-S) centers, to quinones in the respiratory chain. The immediate electron acceptor for the enzyme in this species is believed to be ubiquinone. Couples the redox reaction to proton translocation (for every two electrons transferred, four hydrogen ions are translocated across the cytoplasmic membrane), and thus conserves the redox energy in a proton gradient. This Chromohalobacter salexigens (strain ATCC BAA-138 / DSM 3043 / CIP 106854 / NCIMB 13768 / 1H11) protein is NADH-quinone oxidoreductase subunit I.